The sequence spans 415 residues: Transcription termination factor Rho (415 aa).

A Rho RNA-BD domain is found at 52–119; the sequence is ADIASGVLDI…TDVVRVNGRT (68 aa). Residues 161 to 166, 173 to 178, and Arg204 each bind ATP; these read GKGQRG and KTGKTV.

The protein belongs to the Rho family. As to quaternary structure, homohexamer. The homohexamer assembles into an open ring structure.

Functionally, facilitates transcription termination by a mechanism that involves Rho binding to the nascent RNA, activation of Rho's RNA-dependent ATPase activity, and release of the mRNA from the DNA template. The protein is Transcription termination factor Rho of Streptomyces coelicolor (strain ATCC BAA-471 / A3(2) / M145).